A 503-amino-acid polypeptide reads, in one-letter code: Cytochrome P450 714C1 (503 aa).

Topologically, residues 1–6 (MEKLLA) are lumenal. A helical; Signal-anchor for type III membrane protein transmembrane segment spans residues 7–27 (LIVVLVILLSLALFYLCNILW). Over 28–503 (LRAVKIRKKL…GLPLMVTKLP (476 aa)) the chain is Cytoplasmic. Cysteine 450 contributes to the heme binding site.

It belongs to the cytochrome P450 family. The cofactor is heme.

The protein resides in the membrane. In terms of biological role, probably not involved in gibberellin metabolism since over-expression of CYP714C1 in a heterologous system does not induce semi-dwarfism. This chain is Cytochrome P450 714C1 (CYP714C1), found in Oryza sativa subsp. japonica (Rice).